The primary structure comprises 350 residues: Thioredoxin-like fold domain-containing protein MRL7L, chloroplastic (350 aa).

A chloroplast-targeting transit peptide spans 1-48; that stretch reads MILPFSTQFTCPVQDNGFSPSSLLSHCKRDRFEVTSLRYDSFGSVKTA. Disordered regions lie at residues 78–107 and 182–201; these read KKEE…LDDP and NEKK…DSEK. 2 stretches are compositionally biased toward acidic residues: residues 82 to 93 and 186 to 200; these read DSDSEDEEDEVK and EEED…DDSE.

The protein localises to the plastid. The protein resides in the chloroplast stroma. It localises to the nucleus. Its function is as follows. Plays an essential role in early steps of chloroplast development. Involved in the regulation of plastid gene expression. Required for the proper function of the plastid transcriptional machinery and protein accumulation in thylakoid membranes. May function as molecular chaperone to ensure proper organization of the nucleoids in chloroplasts. Is a necessary component of phytochrome signaling for photosynthesis-associated plastid-encoded genes (PhAPGs) activation. Mediates the degradation of two repressors of chloroplast biogenesis, PIF1 and PIF3 in nucleus. Promotes the assembly of the plastid-encoded RNA polymerase (PEP) complex for PhAPG transcription in plastids. The protein is Thioredoxin-like fold domain-containing protein MRL7L, chloroplastic of Arabidopsis thaliana (Mouse-ear cress).